The primary structure comprises 209 residues: Streptogramin A acetyltransferase (209 aa).

Residue H82 is part of the active site.

Belongs to the transferase hexapeptide repeat family. Homohexamer.

Inactivates the A compounds of streptogramin antibiotics by acetylation, thus providing resistance to these antibiotics. This chain is Streptogramin A acetyltransferase (vatD), found in Enterococcus faecium (Streptococcus faecium).